A 521-amino-acid polypeptide reads, in one-letter code: Glutamate--tRNA ligase (521 aa).

The 'HIGH' region signature appears at 30–40; that stretch reads PSPTGYLHVGG. Positions 277-281 match the 'KMSKS' region motif; that stretch reads KLSKR. Lys-280 serves as a coordination point for ATP.

The protein belongs to the class-I aminoacyl-tRNA synthetase family. Glutamate--tRNA ligase type 1 subfamily. As to quaternary structure, monomer.

Its subcellular location is the cytoplasm. It catalyses the reaction tRNA(Glu) + L-glutamate + ATP = L-glutamyl-tRNA(Glu) + AMP + diphosphate. In terms of biological role, catalyzes the attachment of glutamate to tRNA(Glu) in a two-step reaction: glutamate is first activated by ATP to form Glu-AMP and then transferred to the acceptor end of tRNA(Glu). The protein is Glutamate--tRNA ligase of Chlorobium phaeovibrioides (strain DSM 265 / 1930) (Prosthecochloris vibrioformis (strain DSM 265)).